We begin with the raw amino-acid sequence, 138 residues long: MMAMFEEVEVEAYVYPTEDINKVKKAMLNLVPGLKFEAFDKGEYMILVGKTRDKRALQRLYELFRGQQILDTARMMLEEGYFGEEIIIKVHKQVAYAGKVNFNEESPLGPITITIRTKEPQKLMKWLAPRTKDGVPIE.

Belongs to the UPF0201 family.

The protein is UPF0201 protein PYRAB09730 of Pyrococcus abyssi (strain GE5 / Orsay).